The following is a 358-amino-acid chain: Protein-arginine kinase (358 aa).

The region spanning 24–255 (IVLSSRIRLA…KQLIRQERVA (232 aa)) is the Phosphagen kinase C-terminal domain. ATP contacts are provided by residues 27-31 (SSRIR), His92, Arg126, 177-181 (RASVM), and 208-213 (RGIYGE). The RDXXRA motif of the pArg binding pocket involved in allosteric regulation signature appears at 338–343 (RDERRA).

This sequence belongs to the ATP:guanido phosphotransferase family.

The enzyme catalyses L-arginyl-[protein] + ATP = N(omega)-phospho-L-arginyl-[protein] + ADP + H(+). Appears to be allosterically activated by the binding of pArg-containing polypeptides to the pArg-binding pocket localized in the C-terminal domain of McsB. Its function is as follows. Catalyzes the specific phosphorylation of arginine residues in a large number of proteins. Is part of the bacterial stress response system. Protein arginine phosphorylation has a physiologically important role and is involved in the regulation of many critical cellular processes, such as protein homeostasis, motility, competence, and stringent and stress responses, by regulating gene expression and protein activity. In Shouchella clausii (strain KSM-K16) (Alkalihalobacillus clausii), this protein is Protein-arginine kinase.